Consider the following 774-residue polypeptide: Lysyl oxidase homolog 2 (774 aa).

An N-terminal signal peptide occupies residues 1-25 (MERPLCSHLCSCLAVLALLSPLSLA). 4 SRCR domains span residues 58 to 159 (LRLA…VVCS), 188 to 302 (IRAI…VSCV), 326 to 425 (VRLR…VRCN), and 435 to 544 (LRLN…VACS). Intrachain disulfides connect Cys-84/Cys-148, Cys-97/Cys-158, Cys-128/Cys-138, Cys-218/Cys-291, Cys-231/Cys-301, Cys-265/Cys-275, Cys-351/Cys-414, Cys-364/Cys-424, and Cys-395/Cys-405. N-linked (GlcNAc...) asparagine glycosylation is present at Asn-288. Asn-455 is a glycosylation site (N-linked (GlcNAc...) asparagine). 3 disulfide bridges follow: Cys-464-Cys-530, Cys-477-Cys-543, and Cys-511-Cys-521. Residues 548 to 751 (PDLVLNAEMV…WMYNCHIGGS (204 aa)) are lysyl-oxidase like. The Ca(2+) site is built by Asp-549 and Leu-550. 4 cysteine pairs are disulfide-bonded: Cys-573/Cys-625, Cys-579/Cys-695, Cys-657/Cys-673, and Cys-663/Cys-685. Positions 626, 628, and 630 each coordinate Cu cation. Asn-644 carries an N-linked (GlcNAc...) asparagine glycan. The segment at residues 653-689 (KASFCLEDTECEGDIQKNYECANFGDQGITMGCWDMY) is a cross-link (lysine tyrosylquinone (Lys-Tyr)). Tyr-689 carries the post-translational modification 2',4',5'-topaquinone. The Ca(2+) site is built by Glu-722, Asp-724, Asn-727, and Asn-728. Residues Cys-732 and Cys-746 are joined by a disulfide bond.

It belongs to the lysyl oxidase family. Component of some chromatin repressor complex. Interacts with SNAI1. Interacts with TAF10. Interacts with HSPA5. Interacts with EFEMP2. The cofactor is Cu cation. Lysine tyrosylquinone residue is required as a cofactor. Post-translationally, the lysine tyrosylquinone cross-link (LTQ) is generated by condensation of the epsilon-amino group of a lysine with a topaquinone produced by oxidation of tyrosine. N-glycosylated. N-glycosylation on Asn-455 and Asn-644 may be essential for proper folding and secretion; may be composed of a fucosylated carbohydrates attached to a trimannose N-linked glycan core.

The protein resides in the secreted. It is found in the extracellular space. The protein localises to the extracellular matrix. It localises to the basement membrane. Its subcellular location is the nucleus. The protein resides in the chromosome. It is found in the endoplasmic reticulum. The catalysed reaction is L-lysyl-[protein] + O2 + H2O = (S)-2-amino-6-oxohexanoyl-[protein] + H2O2 + NH4(+). With respect to regulation, specifically inhibited by a mouse monoclonal antibody AB0023, inhibition occurs in a non-competitive manner. Its function is as follows. Mediates the post-translational oxidative deamination of lysine residues on target proteins leading to the formation of deaminated lysine (allysine). Acts as a transcription corepressor and specifically mediates deamination of trimethylated 'Lys-4' of histone H3 (H3K4me3), a specific tag for epigenetic transcriptional activation. Shows no activity against histone H3 when it is trimethylated on 'Lys-9' (H3K9me3) or 'Lys-27' (H3K27me3) or when 'Lys-4' is monomethylated (H3K4me1) or dimethylated (H3K4me2). Also mediates deamination of methylated TAF10, a member of the transcription factor IID (TFIID) complex, which induces release of TAF10 from promoters, leading to inhibition of TFIID-dependent transcription. LOXL2-mediated deamination of TAF10 results in transcriptional repression of genes required for embryonic stem cell pluripotency including POU5F1/OCT4, NANOG, KLF4 and SOX2. Involved in epithelial to mesenchymal transition (EMT) via interaction with SNAI1 and participates in repression of E-cadherin CDH1, probably by mediating deamination of histone H3. During EMT, involved with SNAI1 in negatively regulating pericentromeric heterochromatin transcription. SNAI1 recruits LOXL2 to pericentromeric regions to oxidize histone H3 and repress transcription which leads to release of heterochromatin component CBX5/HP1A, enabling chromatin reorganization and acquisition of mesenchymal traits. Interacts with the endoplasmic reticulum protein HSPA5 which activates the IRE1-XBP1 pathway of the unfolded protein response, leading to expression of several transcription factors involved in EMT and subsequent EMT induction. When secreted into the extracellular matrix, promotes cross-linking of extracellular matrix proteins by mediating oxidative deamination of peptidyl lysine residues in precursors to fibrous collagen and elastin. Acts as a regulator of sprouting angiogenesis, probably via collagen IV scaffolding. Acts as a regulator of chondrocyte differentiation, probably by regulating expression of factors that control chondrocyte differentiation. The chain is Lysyl oxidase homolog 2 (LOXL2) from Pongo abelii (Sumatran orangutan).